Reading from the N-terminus, the 181-residue chain is Regulator of G-protein signaling 10 (181 aa).

The tract at residues M1 to T35 is disordered. Phosphoserine occurs at positions 24 and 41. The RGS domain maps to S41–K156. A lipid anchor (S-palmitoyl cysteine) is attached at C74. The segment at P155 to T181 is disordered. At S176 the chain carries Phosphoserine.

Interacts with GNAZ, GNAI1 and GNAI3. Associates specifically with the activated, GTP-bound forms of GNAZ and GNAI3.

Its subcellular location is the cytoplasm. It localises to the cytosol. The protein localises to the nucleus. Regulates G protein-coupled receptor signaling cascades, including signaling downstream of the muscarinic acetylcholine receptor CHRM2. Inhibits signal transduction by increasing the GTPase activity of G protein alpha subunits, thereby driving them into their inactive GDP-bound form. Modulates the activity of potassium channels that are activated in response to CHRM2 signaling. Activity on GNAZ is inhibited by palmitoylation of the G-protein. This is Regulator of G-protein signaling 10 (Rgs10) from Mus musculus (Mouse).